A 570-amino-acid chain; its full sequence is Sulfite reductase [NADPH] hemoprotein beta-component (570 aa).

[4Fe-4S] cluster contacts are provided by cysteine 434, cysteine 440, cysteine 479, and cysteine 483. Cysteine 483 lines the siroheme pocket.

The protein belongs to the nitrite and sulfite reductase 4Fe-4S domain family. As to quaternary structure, alpha(8)-beta(8). The alpha component is a flavoprotein, the beta component is a hemoprotein. It depends on siroheme as a cofactor. [4Fe-4S] cluster serves as cofactor.

It catalyses the reaction hydrogen sulfide + 3 NADP(+) + 3 H2O = sulfite + 3 NADPH + 4 H(+). The protein operates within sulfur metabolism; hydrogen sulfide biosynthesis; hydrogen sulfide from sulfite (NADPH route): step 1/1. Functionally, component of the sulfite reductase complex that catalyzes the 6-electron reduction of sulfite to sulfide. This is one of several activities required for the biosynthesis of L-cysteine from sulfate. This chain is Sulfite reductase [NADPH] hemoprotein beta-component, found in Salmonella enteritidis PT4 (strain P125109).